A 293-amino-acid polypeptide reads, in one-letter code: Probable aspartoacylase (293 aa).

Positions 14 and 17 each coordinate Zn(2+). Residues Arg56 and 63 to 64 contribute to the substrate site; that span reads NR. Position 106 (His106) interacts with Zn(2+). Positions 165 and 276 each coordinate substrate.

The protein belongs to the AspA/AstE family. Aspartoacylase subfamily. Zn(2+) is required as a cofactor.

It carries out the reaction an N-acyl-L-aspartate + H2O = a carboxylate + L-aspartate. The protein is Probable aspartoacylase of Trichodesmium erythraeum (strain IMS101).